The sequence spans 499 residues: Glycerol kinase (499 aa).

Thr13 is an ADP binding site. Positions 13, 14, and 15 each coordinate ATP. Thr13 is a sn-glycerol 3-phosphate binding site. Residue Arg17 coordinates ADP. The sn-glycerol 3-phosphate site is built by Arg83, Glu84, Tyr135, and Asp244. Residues Arg83, Glu84, Tyr135, Asp244, and Gln245 each contribute to the glycerol site. Positions 266 and 309 each coordinate ADP. 4 residues coordinate ATP: Thr266, Gly309, Gln313, and Gly410. Residues Gly410 and Asn414 each contribute to the ADP site.

This sequence belongs to the FGGY kinase family. As to quaternary structure, homotetramer and homodimer (in equilibrium).

The enzyme catalyses glycerol + ATP = sn-glycerol 3-phosphate + ADP + H(+). It participates in polyol metabolism; glycerol degradation via glycerol kinase pathway; sn-glycerol 3-phosphate from glycerol: step 1/1. With respect to regulation, activated by phosphorylation and inhibited by fructose 1,6-bisphosphate (FBP). Its function is as follows. Key enzyme in the regulation of glycerol uptake and metabolism. Catalyzes the phosphorylation of glycerol to yield sn-glycerol 3-phosphate. The polypeptide is Glycerol kinase (Brevibacillus brevis (strain 47 / JCM 6285 / NBRC 100599)).